The primary structure comprises 517 residues: MTKKSFFSLGRLLLAVPAGAIATLTFAPYNYWLLAPVSIALLLWLLQAQTVKRSGLIGFLWGLGLFGTGISWVHVSIDTFGGMPKIASVFLMSSLISYLALYPAAFGALFNRFNRGRPFHQLMLSGPVIWLLLDWVRGWALTGFPWLWMGYGQIDSPLASLAPILGVEGITLALVLISGALVASVVYRNWKPLMVPVLIMALTWAANTVSWVVPDPTKNLDVALIQGNVPQELKWLPSERWPTLMKYTDLTRENWDADIIVWPEAAIPALEAHLPTFLQNLDSAARNNNSTVITGVLDQKEDGQYFNNILTLGKNAYGPYQYDKATRYSKHHLLPFGEFVPFGDLLRPIAPLFNLPMSSFSRGDLVQPNLEASGYSIAPALCYEVAFSEQVRKNVNIDTDLLLTLSNDAWFGTSIGPFQHMEIAQMRALELGKPLIRSTNTGITAVVDHTGQIIKQIPQFETAVLRATITPTEGLTPYTTLGSWPLYFYSLWSLTLSMILIRRRSGRFRDTRPVETE.

7 consecutive transmembrane segments (helical) span residues 5 to 25 (SFFS…ATLT), 26 to 46 (FAPY…LWLL), 55 to 75 (GLIG…WVHV), 90 to 110 (FLMS…GALF), 128 to 148 (VIWL…PWLW), 162 to 182 (APIL…GALV), and 193 to 213 (LMVP…SWVV). One can recognise a CN hydrolase domain in the interval 225-471 (IQGNVPQELK…TAVLRATITP (247 aa)). The active-site Proton acceptor is E264. K330 is a catalytic residue. The Nucleophile role is filled by C382.

Belongs to the CN hydrolase family. Apolipoprotein N-acyltransferase subfamily.

Its subcellular location is the cell inner membrane. The enzyme catalyses N-terminal S-1,2-diacyl-sn-glyceryl-L-cysteinyl-[lipoprotein] + a glycerophospholipid = N-acyl-S-1,2-diacyl-sn-glyceryl-L-cysteinyl-[lipoprotein] + a 2-acyl-sn-glycero-3-phospholipid + H(+). Its pathway is protein modification; lipoprotein biosynthesis (N-acyl transfer). Functionally, catalyzes the phospholipid dependent N-acylation of the N-terminal cysteine of apolipoprotein, the last step in lipoprotein maturation. The protein is Apolipoprotein N-acyltransferase of Photobacterium profundum (strain SS9).